Consider the following 368-residue polypeptide: Solute carrier family 35 member G1 (368 aa).

Helical transmembrane passes span 72 to 92 (GLGL…SLFV), 100 to 120 (AVEI…PCLI), 134 to 154 (LFLF…YYAF), 161 to 181 (DATV…WIFL), 190 to 210 (AFFT…PFIF), 225 to 245 (IKGT…LVIL), 256 to 276 (LSIW…LFVI), 289 to 309 (LFLI…TKAV), 316 to 336 (LVAI…IAFF), and 340 to 360 (PTWW…GATI). EamA domains are found at residues 83 to 205 (FLFS…LIVR) and 236 to 360 (VLAA…GATI).

The protein belongs to the TMEM20 family. In terms of assembly, interacts with STIM1; stimulated by depletion of intracellular calcium. Interacts with ORAI1. Interacts with the plasma membrane calcium-transporting ATPases ATP2B1 and ATP2B4. Interacts with ATP1A1, ATP2A2, KPNB1 and XPO1.

It is found in the cell membrane. It localises to the endoplasmic reticulum membrane. In terms of biological role, may play a role in intracellular calcium sensing and homeostasis. May act as a negative regulator of plasma membrane calcium-transporting ATPases preventing calcium efflux from the cell. The chain is Solute carrier family 35 member G1 (Slc35g1) from Mus musculus (Mouse).